The following is a 214-amino-acid chain: Adenylate kinase (214 aa).

10 to 15 lines the ATP pocket; it reads GAGKGT. Residues 30-59 are NMP; it reads STGDMLRAAVKAGTPLGLEAKKVMDAGQLV. Residues Thr-31, Arg-36, 57-59, 85-88, and Gln-92 contribute to the AMP site; these read QLV and GFPR. The tract at residues 122 to 159 is LID; sequence GRRVHPGSGRVYHVVFNPPKVEGKDDVTGEDLVIRPDD. ATP-binding positions include Arg-123 and 132 to 133; that span reads VY. AMP is bound by residues Arg-156 and Arg-167. Gln-200 is an ATP binding site.

This sequence belongs to the adenylate kinase family. In terms of assembly, monomer.

Its subcellular location is the cytoplasm. The catalysed reaction is AMP + ATP = 2 ADP. The protein operates within purine metabolism; AMP biosynthesis via salvage pathway; AMP from ADP: step 1/1. Its function is as follows. Catalyzes the reversible transfer of the terminal phosphate group between ATP and AMP. Plays an important role in cellular energy homeostasis and in adenine nucleotide metabolism. The protein is Adenylate kinase of Shewanella amazonensis (strain ATCC BAA-1098 / SB2B).